Reading from the N-terminus, the 277-residue chain is Endochitinase CHI (277 aa).

A signal peptide spans 1–31 (MAKPTSRNDRFALFFITLIFLILTVSKPVAS). Positions 32-66 (QNCGCASDFCCSKYGYCGTTDEFCGEGCQAGPCRS) constitute a Chitin-binding type-1 domain. Disulfide bonds link Cys34–Cys42, Cys36–Cys48, Cys41–Cys55, and Cys59–Cys64. The tract at residues 75-277 (VSLEGTVTPD…GVAPGDNLTC (203 aa)) is catalytic. Glu136 functions as the Proton donor in the catalytic mechanism. The N-linked (GlcNAc...) asparagine glycan is linked to Asn274.

The protein belongs to the glycosyl hydrolase 19 family. Chitinase class I subfamily.

It catalyses the reaction Random endo-hydrolysis of N-acetyl-beta-D-glucosaminide (1-&gt;4)-beta-linkages in chitin and chitodextrins.. In Arabidopsis thaliana (Mouse-ear cress), this protein is Endochitinase CHI.